The primary structure comprises 261 residues: Claudin-18 (261 aa).

Topologically, residues 1-6 (MSTTTC) are cytoplasmic. A helical membrane pass occupies residues 7-27 (QVVAFLLSILGLAGCIAATGM). Over 28–80 (DMWSTQDLYDNPVTSVFQYEGLWRSCVRQSSGFTECRPYFTILGLPAMLQAVR) the chain is Extracellular. A helical transmembrane segment spans residues 81–101 (ALMIVGIVLGAIGLLVSIFAL). Topologically, residues 102–122 (KCIRIGSMEDSAKANMTLTSG) are cytoplasmic. A helical transmembrane segment spans residues 123 to 143 (IMFIVSGLCAIAGVSVFANML). Residues 144-174 (VTNFWMSTANMYTGMGGMVQTVQTRYTFGAA) are Extracellular-facing. A helical membrane pass occupies residues 175–195 (LFVGWVAGGLTLIGGVMMCIA). The segment at 195 to 261 (ACRGLAPEET…QSYPSKHDYV (67 aa)) is required for role in regulation of RANKL-induced osteoclast differentiation. At 196–261 (CRGLAPEETN…QSYPSKHDYV (66 aa)) the chain is on the cytoplasmic side. A Phosphoserine modification is found at Ser-214. A disordered region spans residues 242–261 (DGGARTEDEVQSYPSKHDYV).

It belongs to the claudin family. Interacts with TJP2/ZO-2. Interacts with TJP1/ZO-1. Interacts with YAP1 (phosphorylated); the interaction sequesters YAP1 away from the nucleus and thereby restricts transcription of YAP1 target genes. In terms of assembly, interacts with CLDN19. In terms of tissue distribution, expression is restricted to the lung. As to expression, expression is restricted to the stomach mucosa where it is predominantly observed in the epithelial cells of the pit region and the base of the gastric glands including exocrine and endocrine cells (at protein level).

It is found in the cell junction. It localises to the tight junction. Its subcellular location is the cell membrane. The protein localises to the lateral cell membrane. In terms of biological role, involved in alveolar fluid homeostasis via regulation of alveolar epithelial tight junction composition and therefore ion transport and solute permeability, potentially via downstream regulation of the actin cytoskeleton organization and beta-2-adrenergic signaling. Required for lung alveolarization and maintenance of the paracellular alveolar epithelial barrier. Acts to maintain epithelial progenitor cell proliferation and organ size, via regulation of YAP1 localization away from the nucleus and thereby restriction of YAP1 target gene transcription. Acts as a negative regulator of RANKL-induced osteoclast differentiation, potentially via relocation of TJP2/ZO-2 away from the nucleus, subsequently involved in bone resorption in response to calcium deficiency. Mediates the osteoprotective effects of estrogen, potentially via acting downstream of estrogen signaling independently of RANKL signaling pathways. Involved in the maintenance of homeostasis of the alveolar microenvironment via regulation of pH and subsequent T-cell activation in the alveolar space, is therefore indirectly involved in limiting C.neoformans infection. Functionally, required for the formation of the gastric paracellular barrier via its role in tight junction formation, thereby involved in the response to gastric acidification. The chain is Claudin-18 (CLDN18) from Homo sapiens (Human).